The sequence spans 431 residues: Translation initiation factor 2 subunit gamma (431 aa).

In terms of domain architecture, tr-type G spans 26–223 (QPCVNIGMVG…ALETQIPTPS (198 aa)). The segment at 35 to 42 (GHVDHGKT) is G1. Mg(2+) is bound by residues D38, T42, G63, and S65. Residue 38 to 43 (DHGKTT) coordinates GTP. The tract at residues 63–67 (GISIR) is G2. Zn(2+) contacts are provided by C78, C81, C93, and C96. Positions 110–113 (DAPG) are G3. Residues 166–169 (NKID) and 201–203 (SAQ) contribute to the GTP site. The segment at 166 to 169 (NKID) is G4. Residues 201 to 203 (SAQ) are G5.

This sequence belongs to the TRAFAC class translation factor GTPase superfamily. Classic translation factor GTPase family. EIF2G subfamily. As to quaternary structure, heterotrimer composed of an alpha, a beta and a gamma chain. The cofactor is Mg(2+).

It catalyses the reaction GTP + H2O = GDP + phosphate + H(+). Functionally, eIF-2 functions in the early steps of protein synthesis by forming a ternary complex with GTP and initiator tRNA. This Methanosarcina mazei (strain ATCC BAA-159 / DSM 3647 / Goe1 / Go1 / JCM 11833 / OCM 88) (Methanosarcina frisia) protein is Translation initiation factor 2 subunit gamma.